A 521-amino-acid polypeptide reads, in one-letter code: Cytochrome P450 1A1 (521 aa).

Residue Phe229 participates in substrate binding. Cys463 contacts heme.

This sequence belongs to the cytochrome P450 family. The cofactor is heme.

It localises to the endoplasmic reticulum membrane. It is found in the microsome membrane. It catalyses the reaction an organic molecule + reduced [NADPH--hemoprotein reductase] + O2 = an alcohol + oxidized [NADPH--hemoprotein reductase] + H2O + H(+). Cytochromes P450 are a group of heme-thiolate monooxygenases. They oxidize a variety of structurally unrelated compounds, including steroids, fatty acids, and xenobiotics. This chain is Cytochrome P450 1A1 (cyp1a1), found in Oryzias latipes (Japanese rice fish).